The following is a 120-amino-acid chain: MSKDQILEAIKGMSVLELNDLVKAIEEEFGVTAAAPVAVVAGGGAEAAAEQTEFTVNLVSGGASKINVIKVVRELTGLGLKEAKDLVDNAPKTLKEGVSKDEAEALKAKLEEAGAQVEVK.

Belongs to the bacterial ribosomal protein bL12 family. Homodimer. Part of the ribosomal stalk of the 50S ribosomal subunit. Forms a multimeric L10(L12)X complex, where L10 forms an elongated spine to which 2 to 4 L12 dimers bind in a sequential fashion. Binds GTP-bound translation factors.

In terms of biological role, forms part of the ribosomal stalk which helps the ribosome interact with GTP-bound translation factors. Is thus essential for accurate translation. The protein is Large ribosomal subunit protein bL12 of Brevibacillus brevis (strain 47 / JCM 6285 / NBRC 100599).